A 30-amino-acid polypeptide reads, in one-letter code: Uperin-6.1 (30 aa).

As to expression, expressed by the skin dorsal glands.

The protein localises to the secreted. The chain is Uperin-6.1 from Uperoleia inundata (Floodplain toadlet).